Consider the following 161-residue polypeptide: Cap-associated protein CAF20 (161 aa).

Positions 52-72 are enriched in basic residues; that stretch reads HFGRRRSSHHHGRPKIKHNKP. The disordered stretch occupies residues 52 to 108; it reads HFGRRRSSHHHGRPKIKHNKPKVTTDSDGWCTFEAKKKGSGEDDEEETETTPTSTVP. Phosphoserine occurs at positions 78 and 91. Thr-99, Thr-101, and Thr-102 each carry phosphothreonine. At Ser-154 the chain carries Phosphoserine.

The protein belongs to the CAF20 family. As to quaternary structure, interacts with TIF45. Post-translationally, phosphorylated by casein kinase II complex (CK2).

The protein localises to the cytoplasm. Acts as an inhibitor of cap-dependent translation. Competes with eIF4G1/TIF4631 and EAP1 for binding to eIF4E/TIF45 and interferes with the formation of the eIF4F complex, inhibiting translation and stabilizing mRNA. Binding affinity for eIF4E/TIF45 is 10-fold less than that of eIF4G1/TIF4631. Required for induction of pseudohyphal growth in response to nitrogen limitation, probably by regulating STE12 translation. The protein is Cap-associated protein CAF20 (CAF20) of Saccharomyces cerevisiae (strain YJM789) (Baker's yeast).